A 288-amino-acid polypeptide reads, in one-letter code: MSQTYLSLTVELPEEASEAVQDLLHESGALGLEVRDREAPLMPGVRGPNPGEAIIIGYFDERDTAESARDEVASSFPEAKLTLDEQPQQDWSNEWKSLIKSVHVGRLWVGPPWDKANAPAGTVQLVIEPKMAFGTGDHPTTSLCLAAVDAYMAEHPGAAVLDVGTGTGVLAIAAKKLGAGRTVATDNDPISVELAQENQAENGTPDIEVSGKELTQVEGTFDLVLANILANTLIELAPLIVAKTKDRLVLAGVLSHQRADVEAAYRNLGLTVLTGATQGEWVRIDLQR.

S-adenosyl-L-methionine contacts are provided by Thr141, Gly164, Asp186, and Asn227.

Belongs to the methyltransferase superfamily. PrmA family.

Its subcellular location is the cytoplasm. It catalyses the reaction L-lysyl-[protein] + 3 S-adenosyl-L-methionine = N(6),N(6),N(6)-trimethyl-L-lysyl-[protein] + 3 S-adenosyl-L-homocysteine + 3 H(+). Methylates ribosomal protein L11. The polypeptide is Ribosomal protein L11 methyltransferase (Myxococcus xanthus (strain DK1622)).